Consider the following 403-residue polypeptide: Putative gustatory receptor 98b (403 aa).

Residues 1-11 (MVAQKSRLLAR) are Cytoplasmic-facing. Residues 12-32 (AFPYLDIFSVFALTPPPQSFG) traverse the membrane as a helical segment. Over 33–48 (HTPHRRLRWYLMTGYV) the chain is Extracellular. A helical transmembrane segment spans residues 49 to 69 (FYATAILATVFIVSYFNIIAI). The Cytoplasmic segment spans residues 70–83 (DEEVLEYNVSDFTR). The chain crosses the membrane as a helical span at residues 84-104 (VMGNIQKSLYSIMAIANHLNM). The Extracellular segment spans residues 105-144 (LINYRRLGGIYKDIADLEMDMDEASQCFGGQRQRFSFRFR). The chain crosses the membrane as a helical span at residues 145-165 (MALCVGVWMILMVGSMPRLTM). Topologically, residues 166–191 (TAMGPFVSTLLKILTEFVMIMQQLKS) are cytoplasmic. The helical transmembrane segment at 192-212 (LEYCVFVLIIYELVLRLRRTL) threads the bilayer. Residues 213–259 (SQLQEEFQDCEQQDMLQALCVALKRNQLLLGRIWRLEGDVGSYFTPT) are Extracellular-facing. The chain crosses the membrane as a helical span at residues 260–280 (MLLLFLYNGLTILHMVNWAYI). Over 281-365 (NKFLYDSCCQ…LRFTCGGLFD (85 aa)) the chain is Cytoplasmic. The chain crosses the membrane as a helical span at residues 366 to 386 (INLKYFGGLLVTIFGYIIILI). Topologically, residues 387 to 403 (QFKVQAIAANRYKKVVN) are extracellular.

Belongs to the insect chemoreceptor superfamily. Gustatory receptor (GR) family. Gr2a subfamily.

The protein resides in the cell membrane. In terms of biological role, probable gustatory receptor which mediates acceptance or avoidance behavior, depending on its substrates. The chain is Putative gustatory receptor 98b (Gr98b) from Drosophila melanogaster (Fruit fly).